The following is an 83-amino-acid chain: Cytochrome b559 subunit alpha (83 aa).

A helical membrane pass occupies residues 21–35; that stretch reads VIHSITIPSLFIAGW. Histidine 23 is a heme binding site.

The protein belongs to the PsbE/PsbF family. As to quaternary structure, heterodimer of an alpha subunit and a beta subunit. PSII is composed of 1 copy each of membrane proteins PsbA, PsbB, PsbC, PsbD, PsbE, PsbF, PsbH, PsbI, PsbJ, PsbK, PsbL, PsbM, PsbT, PsbX, PsbY, PsbZ, Psb30/Ycf12, at least 3 peripheral proteins of the oxygen-evolving complex and a large number of cofactors. It forms dimeric complexes. Requires heme b as cofactor.

It is found in the plastid membrane. This b-type cytochrome is tightly associated with the reaction center of photosystem II (PSII). PSII is a light-driven water:plastoquinone oxidoreductase that uses light energy to abstract electrons from H(2)O, generating O(2) and a proton gradient subsequently used for ATP formation. It consists of a core antenna complex that captures photons, and an electron transfer chain that converts photonic excitation into a charge separation. In Cuscuta reflexa (Southern Asian dodder), this protein is Cytochrome b559 subunit alpha.